A 787-amino-acid polypeptide reads, in one-letter code: Aminodeoxychorismate synthase (787 aa).

In terms of domain architecture, Glutamine amidotransferase type-1 spans 16–233; it reads HVLFIDSYDS…LKLSFINNVK (218 aa). Catalysis depends on residues cysteine 112, histidine 207, and glutamate 209. The tract at residues 304-787 is PABB component; it reads MSSSVISENT…KLESNLQIFM (484 aa).

It in the C-terminal section; belongs to the anthranilate synthase component I family.

The protein localises to the cytoplasm. The catalysed reaction is chorismate + L-glutamine = 4-amino-4-deoxychorismate + L-glutamate. It participates in cofactor biosynthesis; tetrahydrofolate biosynthesis; 4-aminobenzoate from chorismate: step 1/2. Functionally, catalyzes the biosynthesis of 4-amino-4-deoxychorismate (ADC) from chorismate and glutamine. Required for the synthesis of 4-aminobenzoate (PABA), an important component in tetrahydrofolate biosynthesis. This Saccharomyces cerevisiae (strain ATCC 204508 / S288c) (Baker's yeast) protein is Aminodeoxychorismate synthase (ABZ1).